A 453-amino-acid polypeptide reads, in one-letter code: Homogentisate 1,2-dioxygenase (453 aa).

The segment covering 1-12 (MLEKAERQRKAA) has biased composition (basic and acidic residues). Residues 1–43 (MLEKAERQRKAAPDQQRSAGYMPGFGNDFETESLPGSLPQGQN) form a disordered region. The active-site Proton acceptor is His-306. Fe cation is bound by residues His-349 and Glu-355. Residues Tyr-364 and His-385 each contribute to the homogentisate site. His-385 contributes to the Fe cation binding site.

This sequence belongs to the homogentisate dioxygenase family. In terms of assembly, hexamer; dimer of trimers. Requires Fe cation as cofactor.

The catalysed reaction is homogentisate + O2 = 4-maleylacetoacetate + H(+). The protein operates within amino-acid degradation; L-phenylalanine degradation; acetoacetate and fumarate from L-phenylalanine: step 4/6. Its function is as follows. Involved in the catabolism of homogentisate (2,5-dihydroxyphenylacetate or 2,5-OH-PhAc), a central intermediate in the degradation of phenylalanine and tyrosine. Catalyzes the oxidative ring cleavage of the aromatic ring of homogentisate to yield maleylacetoacetate. This Sinorhizobium medicae (strain WSM419) (Ensifer medicae) protein is Homogentisate 1,2-dioxygenase.